Here is a 432-residue protein sequence, read N- to C-terminus: Phosphomethylpyrimidine synthase (432 aa).

Residues Asn69, Met98, Tyr127, His163, 185-187 (SRG), 226-229 (DACR), and Glu265 contribute to the substrate site. Residue His269 participates in Zn(2+) binding. Residue Tyr292 participates in substrate binding. His333 contributes to the Zn(2+) binding site. Positions 409, 412, and 416 each coordinate [4Fe-4S] cluster.

It belongs to the ThiC family. Requires [4Fe-4S] cluster as cofactor.

It carries out the reaction 5-amino-1-(5-phospho-beta-D-ribosyl)imidazole + S-adenosyl-L-methionine = 4-amino-2-methyl-5-(phosphooxymethyl)pyrimidine + CO + 5'-deoxyadenosine + formate + L-methionine + 3 H(+). The protein operates within cofactor biosynthesis; thiamine diphosphate biosynthesis. Catalyzes the synthesis of the hydroxymethylpyrimidine phosphate (HMP-P) moiety of thiamine from aminoimidazole ribotide (AIR) in a radical S-adenosyl-L-methionine (SAM)-dependent reaction. The polypeptide is Phosphomethylpyrimidine synthase (Pelotomaculum thermopropionicum (strain DSM 13744 / JCM 10971 / SI)).